Consider the following 101-residue polypeptide: Phosphoribosyl-AMP cyclohydrolase (101 aa).

Asp-71 is a Mg(2+) binding site. Zn(2+) is bound at residue Cys-72. Mg(2+) is bound by residues Asp-73 and Asp-75. Zn(2+) is bound by residues Cys-88 and Cys-95.

This sequence belongs to the PRA-CH family. In terms of assembly, homodimer. Mg(2+) serves as cofactor. The cofactor is Zn(2+).

It is found in the cytoplasm. The catalysed reaction is 1-(5-phospho-beta-D-ribosyl)-5'-AMP + H2O = 1-(5-phospho-beta-D-ribosyl)-5-[(5-phospho-beta-D-ribosylamino)methylideneamino]imidazole-4-carboxamide. It functions in the pathway amino-acid biosynthesis; L-histidine biosynthesis; L-histidine from 5-phospho-alpha-D-ribose 1-diphosphate: step 3/9. Catalyzes the hydrolysis of the adenine ring of phosphoribosyl-AMP. The chain is Phosphoribosyl-AMP cyclohydrolase from Bacillus cereus (strain Q1).